The chain runs to 223 residues: Lipoprotein-releasing system ATP-binding protein LolD (223 aa).

The ABC transporter domain occupies 1-223; that stretch reads MAKVFRSGST…DEVEPQSLPA (223 aa). Position 32 to 39 (32 to 39) interacts with ATP; that stretch reads GDSGSGKS.

This sequence belongs to the ABC transporter superfamily. Lipoprotein translocase (TC 3.A.1.125) family. The complex is composed of two ATP-binding proteins (LolD) and two transmembrane proteins (LolC and LolE).

It is found in the cell inner membrane. Its function is as follows. Part of the ABC transporter complex LolCDE involved in the translocation of mature outer membrane-directed lipoproteins, from the inner membrane to the periplasmic chaperone, LolA. Responsible for the formation of the LolA-lipoprotein complex in an ATP-dependent manner. The sequence is that of Lipoprotein-releasing system ATP-binding protein LolD from Koribacter versatilis (strain Ellin345).